The primary structure comprises 252 residues: Transcription factor bHLH117 (252 aa).

The disordered stretch occupies residues 103–141; that stretch reads LFPSLSPPLPAAKRQKLNSTSSSTTSGSPTASNDGGIIT. A compositionally biased stretch (low complexity) spans 121-134; the sequence is STSSSTTSGSPTAS. The 50-residue stretch at 130-179 folds into the bHLH domain; the sequence is SPTASNDGGIITKRRKISDKIRSLEKLMPWERKMNLAMTLEESHKYIKFL.

Homodimer.

It is found in the nucleus. This chain is Transcription factor bHLH117 (BHLH117), found in Arabidopsis thaliana (Mouse-ear cress).